The chain runs to 81 residues: MSVKGQMLQDPFLNTLRKEHVPVSIYLVNGIKLQGQVDSFDQYVILLKNTVTQMVYKHAISTIVPGRAVSIPHGPTPTSES.

A Sm domain is found at 10-69 (DPFLNTLRKEHVPVSIYLVNGIKLQGQVDSFDQYVILLKNTVTQMVYKHAISTIVPGRAV).

Belongs to the Hfq family. As to quaternary structure, homohexamer.

RNA chaperone that binds small regulatory RNA (sRNAs) and mRNAs to facilitate mRNA translational regulation in response to envelope stress, environmental stress and changes in metabolite concentrations. Also binds with high specificity to tRNAs. The polypeptide is RNA-binding protein Hfq (Methylobacillus flagellatus (strain ATCC 51484 / DSM 6875 / VKM B-1610 / KT)).